The chain runs to 230 residues: Ribosome biogenesis protein SLX9 homolog (230 aa).

A compositionally biased stretch (basic residues) spans Met-1–Val-11. Disordered regions lie at residues Met-1–Gly-42 and Leu-155–Gln-187. Over residues Gly-25–Ala-38 the composition is skewed to pro residues. Thr-34 is subject to Phosphothreonine. Over residues Arg-166–Glu-177 the composition is skewed to basic and acidic residues. The residue at position 203 (Ser-203) is a Phosphoserine.

It belongs to the SLX9 family. As to expression, not detected in any tested tissue.

It is found in the nucleus. It localises to the nucleolus. May be involved in ribosome biogenesis. The sequence is that of Ribosome biogenesis protein SLX9 homolog from Homo sapiens (Human).